Reading from the N-terminus, the 137-residue chain is uncharacterized protein (137 aa).

The Ubiquitin-like domain occupies 58–135 (VHVVAKTVRP…EVNLQMFLMN (78 aa)).

It localises to the cytoplasm. Its subcellular location is the nucleus. This is an uncharacterized protein from Schizosaccharomyces pombe (strain 972 / ATCC 24843) (Fission yeast).